A 754-amino-acid polypeptide reads, in one-letter code: ToMV resistance protein Tm-1(GCR237) (754 aa).

The N-terminal inhibitory domain NN stretch occupies residues 1 to 201 (MATAQSNSPR…AGMVIGRLES (201 aa)). ATP is bound by residues 18-20 (DTK), Thr55, Arg92, and 124-127 (GSGG). Positions 211 to 431 (KFTVGVTMFG…VDSFLEISPK (221 aa)) are N-terminal inhibitory domain NC.

It belongs to the UPF0261 family. Homodimer. In terms of assembly, (Microbial infection) Binds, via an ATP bridge, to the tobamoviruses avirulent (Avr) replication proteins (large and small subunits, e.g. tomato mosaic virus (ToMV/TMV) AC P03587, tobacco mild green mosaic virus (TMGMV) AC P18339 and pepper mild mottle virus (PMMoV) AC P89657) to inhibit their function after the translation of tobamoviruses RNA, but before the viral replication complex formation on the membrane surfaces; this interaction is not possible with resistance-breaking strains replication proteins.

In terms of biological role, inhibitor of viral RNA replication which confers resistance to some tobamoviruses including tomato mosaic virus (ToMV) (e.g. isolate L), tobacco mosaic virus (TMV), tobacco mild green mosaic virus (TMGMV) and pepper mild mottle virus (PMMoV), but not to resistance-breaking isolates of ToMV (e.g. LT1, SL-1 and ToMV1-2) and tomato brown rugose fruit virus (ToBRFV). Prevents tobamoviruses RNA replication by affecting the association of tobamoviruses replication proteins (large and small subunits) with host membrane-associated proteins (e.g. TOM1, TOM2A and ARL8), thus inhibiting the replication complex formation on the membranes and avoiding viral negative-strand RNA synthesis. Inhibits triphosphatase activity of ToMV replication proteins. The protein is ToMV resistance protein Tm-1(GCR237) of Solanum lycopersicum (Tomato).